Here is a 379-residue protein sequence, read N- to C-terminus: UDP-4-amino-4-deoxy-L-arabinose--oxoglutarate aminotransferase (379 aa).

At K182 the chain carries N6-(pyridoxal phosphate)lysine.

This sequence belongs to the DegT/DnrJ/EryC1 family. ArnB subfamily. Homodimer. The cofactor is pyridoxal 5'-phosphate.

It catalyses the reaction UDP-4-amino-4-deoxy-beta-L-arabinose + 2-oxoglutarate = UDP-beta-L-threo-pentopyranos-4-ulose + L-glutamate. The protein operates within nucleotide-sugar biosynthesis; UDP-4-deoxy-4-formamido-beta-L-arabinose biosynthesis; UDP-4-deoxy-4-formamido-beta-L-arabinose from UDP-alpha-D-glucuronate: step 2/3. It participates in bacterial outer membrane biogenesis; lipopolysaccharide biosynthesis. Catalyzes the conversion of UDP-4-keto-arabinose (UDP-Ara4O) to UDP-4-amino-4-deoxy-L-arabinose (UDP-L-Ara4N). The modified arabinose is attached to lipid A and is required for resistance to polymyxin and cationic antimicrobial peptides. This Erwinia tasmaniensis (strain DSM 17950 / CFBP 7177 / CIP 109463 / NCPPB 4357 / Et1/99) protein is UDP-4-amino-4-deoxy-L-arabinose--oxoglutarate aminotransferase.